The following is a 163-amino-acid chain: Peptidyl-prolyl cis-trans isomerase (163 aa).

A PPIase cyclophilin-type domain is found at 17 to 163; the sequence is KTAYATIKTN…IESVVFSSSL (147 aa).

This sequence belongs to the cyclophilin-type PPIase family.

The catalysed reaction is [protein]-peptidylproline (omega=180) = [protein]-peptidylproline (omega=0). Functionally, PPIases accelerate the folding of proteins. It catalyzes the cis-trans isomerization of proline imidic peptide bonds in oligopeptides. In Helicobacter pylori (strain ATCC 700392 / 26695) (Campylobacter pylori), this protein is Peptidyl-prolyl cis-trans isomerase (ppiA).